Here is a 429-residue protein sequence, read N- to C-terminus: Enolase (429 aa).

Gln-166 serves as a coordination point for (2R)-2-phosphoglycerate. Glu-208 serves as the catalytic Proton donor. Residues Asp-245, Glu-289, and Asp-316 each coordinate Mg(2+). (2R)-2-phosphoglycerate contacts are provided by Lys-341, Arg-370, Ser-371, and Lys-392. Lys-341 acts as the Proton acceptor in catalysis.

The protein belongs to the enolase family. Component of the RNA degradosome, a multiprotein complex involved in RNA processing and mRNA degradation. Mg(2+) is required as a cofactor.

It localises to the cytoplasm. The protein resides in the secreted. It is found in the cell surface. The catalysed reaction is (2R)-2-phosphoglycerate = phosphoenolpyruvate + H2O. The protein operates within carbohydrate degradation; glycolysis; pyruvate from D-glyceraldehyde 3-phosphate: step 4/5. Functionally, catalyzes the reversible conversion of 2-phosphoglycerate (2-PG) into phosphoenolpyruvate (PEP). It is essential for the degradation of carbohydrates via glycolysis. In Acinetobacter baumannii (strain AB307-0294), this protein is Enolase.